Consider the following 94-residue polypeptide: DNA-binding protein HU (94 aa).

Belongs to the bacterial histone-like protein family. Homodimer.

Functionally, histone-like DNA-binding protein which is capable of wrapping DNA to stabilize it, and thus to prevent its denaturation under extreme environmental conditions. The sequence is that of DNA-binding protein HU (hup) from Helicobacter pylori (strain J99 / ATCC 700824) (Campylobacter pylori J99).